The following is a 128-amino-acid chain: 3-aminoacrylate deaminase RutC (128 aa).

The protein belongs to the RutC family.

It carries out the reaction (Z)-3-aminoacrylate + H2O + H(+) = 3-oxopropanoate + NH4(+). Functionally, involved in pyrimidine catabolism. Catalyzes the deamination of 3-aminoacrylate to malonic semialdehyde, a reaction that can also occur spontaneously. RutC may facilitate the reaction and modulate the metabolic fitness, rather than catalyzing essential functions. The protein is 3-aminoacrylate deaminase RutC of Pantoea ananatis (strain LMG 20103).